A 412-amino-acid polypeptide reads, in one-letter code: MDGRTLGLWLLPPVVGGIIGYFTNDLAIRMLFRPYRPVVIGGWQLPFTPGLIPANQGRLARRIADAILGSLLTPDALHDLARRLLELPRLEAAIAWLVSLLLERLREVRDPRSIEVAADVLRDLAGSALPRWLRAIVRQRQGLDAQIDRWFEQQLLSQKLGPLQAQQLGDWLLEGAFPPDQIRRVMLDFLTDDNIRNLDRIVRDRTRGTDWVIANLFGVQSSLQRLRQFLREQPEAGDAVIAELSQRLALRQQLSQALQTFQLTDLPQTTLTDLRLQLRQGLRQWLDQDGLSLLEGALGGLDWTAAARALLDRLRTAVISDEAIAAFSHEVALILDQRLEHELEDLVAAALPILALEDLIIGRVEATPAADLEAAIQGIVRSELQAIVNIGGVLGVLLGCVQSLINVWSLST.

2 helical membrane passes run 8 to 28 (LWLL…DLAI) and 390 to 410 (IGGV…VWSL).

The protein belongs to the UPF0754 family.

Its subcellular location is the cell inner membrane. The sequence is that of UPF0754 membrane protein Synpcc7942_1098 from Synechococcus elongatus (strain ATCC 33912 / PCC 7942 / FACHB-805) (Anacystis nidulans R2).